The sequence spans 451 residues: Potassium/sodium uptake protein NtpJ (451 aa).

Helical transmembrane passes span 18–38, 46–66, 78–98, 133–153, 162–182, 192–212, 230–250, 293–313, 350–370, 380–400, and 410–430; these read IAAG…LPFF, HFID…LTTL, FLIM…PILF, ILKF…VVFI, IWFS…DLLG, VYLI…FIVW, VALS…LITE, LILT…AGGL, ALTL…VLSV, IEYI…TMGL, and LVII…VFSL.

It belongs to the TrkH potassium transport family.

The protein resides in the cell membrane. Mediates electrogenic transport of potassium as well as sodium. Acts probably as a potassium-sodium cotransporter. Major sodium reentry pathway at high pH values. The chain is Potassium/sodium uptake protein NtpJ (ntpJ) from Enterococcus hirae (strain ATCC 9790 / DSM 20160 / JCM 8729 / LMG 6399 / NBRC 3181 / NCIMB 6459 / NCDO 1258 / NCTC 12367 / WDCM 00089 / R).